The chain runs to 319 residues: ATP-dependent 6-phosphofructokinase (319 aa).

G11 serves as a coordination point for ATP. 21–25 contacts ADP; sequence RAVVR. ATP-binding positions include 72–73 and 102–105; these read RC and GDGS. A Mg(2+)-binding site is contributed by D103. Substrate is bound at residue 125-127; it reads TID. The Proton acceptor role is filled by D127. R154 serves as a coordination point for ADP. Substrate-binding positions include R162 and 169 to 171; that span reads MGR. Residues 185-187, R211, and 213-215 each bind ADP; these read GAE and KKH. Substrate contacts are provided by residues E222, R243, and 249-252; that span reads HVQR.

It belongs to the phosphofructokinase type A (PFKA) family. ATP-dependent PFK group I subfamily. Prokaryotic clade 'B1' sub-subfamily. In terms of assembly, homotetramer. It depends on Mg(2+) as a cofactor.

It is found in the cytoplasm. The enzyme catalyses beta-D-fructose 6-phosphate + ATP = beta-D-fructose 1,6-bisphosphate + ADP + H(+). It functions in the pathway carbohydrate degradation; glycolysis; D-glyceraldehyde 3-phosphate and glycerone phosphate from D-glucose: step 3/4. With respect to regulation, allosterically activated by ADP and other diphosphonucleosides, and allosterically inhibited by phosphoenolpyruvate. Its function is as follows. Catalyzes the phosphorylation of D-fructose 6-phosphate to fructose 1,6-bisphosphate by ATP, the first committing step of glycolysis. The sequence is that of ATP-dependent 6-phosphofructokinase from Geobacillus kaustophilus (strain HTA426).